Consider the following 365-residue polypeptide: Spermidine-binding periplasmic protein SpuE (365 aa).

The N-terminal stretch at 1-24 (MQHSIGKTLLVAALATAIAGPVQA) is a signal peptide. Spermidine-binding residues include Thr35, Glu181, Asp242, and Asn269.

Belongs to the bacterial solute-binding protein PotD/PotF family.

The protein localises to the periplasm. Its function is as follows. Spermidine-binding protein probably required for its uptake into cells. Binds spermidine with high affinity (KD=14.3 nM). Does not bind putrescine, cadaverine or spermine. Spermidine binding induces large inter-domain conformational changes. Implicated in induction of type 3 secretion systems (T3SS), which play a role in virulence. This Pseudomonas aeruginosa (strain ATCC 15692 / DSM 22644 / CIP 104116 / JCM 14847 / LMG 12228 / 1C / PRS 101 / PAO1) protein is Spermidine-binding periplasmic protein SpuE (spuE).